Here is a 583-residue protein sequence, read N- to C-terminus: CTP synthase (583 aa).

Residues 1 to 278 form an amidoligase domain region; it reads MRKHPQTATK…DAYVVRRLNL (278 aa). A CTP-binding site is contributed by serine 20. Serine 20 is a UTP binding site. ATP is bound by residues 21 to 26 and aspartate 78; that span reads SLGKGL. The Mg(2+) site is built by aspartate 78 and glutamate 152. CTP is bound by residues 159–161, 199–204, and lysine 235; these read DIE and KTKPTQ. UTP is bound by residues 199–204 and lysine 235; that span reads KTKPTQ. The 249-residue stretch at 303-551 folds into the Glutamine amidotransferase type-1 domain; sequence RIALVGKYVE…VGAAMDYKAG (249 aa). Glycine 366 lines the L-glutamine pocket. The Nucleophile; for glutamine hydrolysis role is filled by cysteine 393. Residues 394–397, glutamate 416, and arginine 477 contribute to the L-glutamine site; that span reads LGLQ. Residues histidine 524 and glutamate 526 contribute to the active site. Residues 560 to 583 are disordered; sequence EQSSNGIQHRDSAARPIPEPAARG.

It belongs to the CTP synthase family. Homotetramer.

It catalyses the reaction UTP + L-glutamine + ATP + H2O = CTP + L-glutamate + ADP + phosphate + 2 H(+). It carries out the reaction L-glutamine + H2O = L-glutamate + NH4(+). The enzyme catalyses UTP + NH4(+) + ATP = CTP + ADP + phosphate + 2 H(+). It participates in pyrimidine metabolism; CTP biosynthesis via de novo pathway; CTP from UDP: step 2/2. Allosterically activated by GTP, when glutamine is the substrate; GTP has no effect on the reaction when ammonia is the substrate. The allosteric effector GTP functions by stabilizing the protein conformation that binds the tetrahedral intermediate(s) formed during glutamine hydrolysis. Inhibited by the product CTP, via allosteric rather than competitive inhibition. Its function is as follows. Catalyzes the ATP-dependent amination of UTP to CTP with either L-glutamine or ammonia as the source of nitrogen. Regulates intracellular CTP levels through interactions with the four ribonucleotide triphosphates. The polypeptide is CTP synthase (Mycolicibacterium paratuberculosis (strain ATCC BAA-968 / K-10) (Mycobacterium paratuberculosis)).